A 37-amino-acid polypeptide reads, in one-letter code: Large ribosomal subunit protein bL36 (37 aa).

This sequence belongs to the bacterial ribosomal protein bL36 family.

This Salinispora arenicola (strain CNS-205) protein is Large ribosomal subunit protein bL36.